The primary structure comprises 478 residues: Cytochrome c-552 (478 aa).

Positions Met1–Ala27 are cleaved as a signal peptide. His91 serves as a coordination point for heme c. Cys119, Cys122, and Lys123 together coordinate heme. Residues Cys157, Cys160, His161, Cys206, Cys209, and His210 each coordinate heme c. Ca(2+)-binding residues include Glu212, Tyr213, Lys258, and Gln260. Tyr213 is a binding site for substrate. Position 261 (His261) interacts with substrate. Residues His272, Cys279, Cys282, His283, His298, Cys311, Cys314, His315, and His390 each contribute to the heme c site.

This sequence belongs to the cytochrome c-552 family. Ca(2+) serves as cofactor. It depends on heme c as a cofactor.

It is found in the periplasm. The enzyme catalyses 6 Fe(III)-[cytochrome c] + NH4(+) + 2 H2O = 6 Fe(II)-[cytochrome c] + nitrite + 8 H(+). Its pathway is nitrogen metabolism; nitrate reduction (assimilation). In terms of biological role, catalyzes the reduction of nitrite to ammonia, consuming six electrons in the process. This is Cytochrome c-552 from Aliivibrio fischeri (strain ATCC 700601 / ES114) (Vibrio fischeri).